A 1382-amino-acid polypeptide reads, in one-letter code: Eukaryotic translation initiation factor 3 subunit A (1382 aa).

Position 68 is an N6-acetyllysine (Lys68). A coiled-coil region spans residues 82-120 (NIKSLEDVVRAYLKMAEEKTEAAKEESQQMVLDIEDLDN). The PCI domain occupies 315–498 (MQRMSTRVLL…RTLSFGSDLN (184 aa)). Phosphoserine occurs at positions 492 and 584. An interaction with EIF3B region spans residues 664-835 (LDPDFIMAKQ…REERERAERA (172 aa)). 2 disordered regions span residues 810–844 (KEEEEQRRAEEQMLKEREERERAERAKREEELREY) and 866–1382 (EERE…TVRR). Basic and acidic residues-rich tracts occupy residues 866-1165 (EERE…DDSR), 1177-1328 (GWRE…DPPR), and 1336-1371 (SRDRERDRDREREGEKEKASWRAEKDRESLRRTKNE). 3 positions are modified to phosphoserine: Ser881, Ser882, and Ser895. The stretch at 925–934 (DEDRSHRRDE) is repeat 1. The tract at residues 925 to 1172 (DEDRSHRRDE…DSRPGPWRPL (248 aa)) is 25 X 10 AA approximate tandem repeats of [DE]-[DE]-[DE]-R-[SEVGFPILV]-[HPSN]-[RSW]-[RL]-[DRGTIHN]-[EPMANLGDT]. A 2; truncated repeat occupies 935–942 (ERPRRLGD). Repeat copies occupy residues 943–952 (DEDREPSLRP), 953–962 (DDDRVPRRGM), 963–972 (DDDRGPRRGP), 973–982 (EEDRFSRRGA), 983–992 (DDDRPSWRNT), 993–1002 (DDDRPPRRIA), 1003–1012 (DEDRGNWRHA), 1013–1022 (DDDRPPRRGL), 1023–1032 (DEDRGSWRTA), 1033–1042 (DEDRGPRRGM), 1043–1052 (DDDRGPRRGG), 1054–1063 (DDERSSWRNA), 1064–1073 (DDDRGPRRGL), 1074–1083 (DDDRGPRRGM), 1084–1093 (DDDRGPRRGM), 1094–1103 (DDDRGPRRGM), 1104–1113 (DDDRGPRRGL), 1114–1123 (DDDRGPWRNA), 1124–1133 (DDDRIPRRGA), and 1134–1143 (EDDRGPWRNM). A Phosphoserine modification is found at Ser949. Position 1028 is a phosphoserine (Ser1028). The 23; truncated repeat unit spans residues 1144 to 1152 (DDDRLSRRA). Repeat 24 spans residues 1153–1162 (DDDRFPRRGD). The stretch at 1163 to 1172 (DSRPGPWRPL) is one 25; approximate repeat. Ser1188, Ser1198, Ser1262, Ser1336, and Ser1364 each carry phosphoserine.

Interacts with EIF4G1. Component of the eukaryotic translation initiation factor 3 (eIF-3) complex, which is composed of 13 subunits: EIF3A, EIF3B, EIF3C, EIF3D, EIF3E, EIF3F, EIF3G, EIF3H, EIF3I, EIF3J, EIF3K, EIF3L and EIF3M. The eIF-3 complex appears to include 3 stable modules: module A is composed of EIF3A, EIF3B, EIF3G and EIF3I; module B is composed of EIF3F, EIF3H, and EIF3M; and module C is composed of EIF3C, EIF3D, EIF3E, EIF3L and EIF3K. EIF3C of module C binds EIF3B of module A and EIF3H of module B, thereby linking the three modules. EIF3J is a labile subunit that binds to the eIF-3 complex via EIF3B. The eIF-3 complex interacts with RPS6KB1 under conditions of nutrient depletion. Mitogenic stimulation leads to binding and activation of a complex composed of MTOR and RPTOR, leading to phosphorylation and release of RPS6KB1 and binding of EIF4B to eIF-3. Also interacts with KRT7 and PIWIL2. Phosphorylated. Phosphorylation is enhanced upon serum stimulation.

It localises to the cytoplasm. RNA-binding component of the eukaryotic translation initiation factor 3 (eIF-3) complex, which is required for several steps in the initiation of protein synthesis. The eIF-3 complex associates with the 40S ribosome and facilitates the recruitment of eIF-1, eIF-1A, eIF-2:GTP:methionyl-tRNAi and eIF-5 to form the 43S pre-initiation complex (43S PIC). The eIF-3 complex stimulates mRNA recruitment to the 43S PIC and scanning of the mRNA for AUG recognition. The eIF-3 complex is also required for disassembly and recycling of post-termination ribosomal complexes and subsequently prevents premature joining of the 40S and 60S ribosomal subunits prior to initiation. The eIF-3 complex specifically targets and initiates translation of a subset of mRNAs involved in cell proliferation, including cell cycling, differentiation and apoptosis, and uses different modes of RNA stem-loop binding to exert either translational activation or repression. Its function is as follows. (Microbial infection) Essential for the initiation of translation on type-1 viral ribosomal entry sites (IRESs), like for HCV, PV, EV71 or BEV translation. In terms of biological role, (Microbial infection) In case of FCV infection, plays a role in the ribosomal termination-reinitiation event leading to the translation of VP2. This Homo sapiens (Human) protein is Eukaryotic translation initiation factor 3 subunit A.